A 306-amino-acid chain; its full sequence is Acetaldehyde dehydrogenase 2/3 (306 aa).

C130 acts as the Acyl-thioester intermediate in catalysis. NAD(+)-binding positions include 161–169 (SAGPGTRKN) and N272.

It belongs to the acetaldehyde dehydrogenase family.

The catalysed reaction is acetaldehyde + NAD(+) + CoA = acetyl-CoA + NADH + H(+). The polypeptide is Acetaldehyde dehydrogenase 2/3 (mhpF) (Azoarcus sp. (strain BH72)).